A 285-amino-acid polypeptide reads, in one-letter code: VQ motif-containing protein 20 (285 aa).

A compositionally biased stretch (basic and acidic residues) spans 1 to 10 (MSSTYKDNHP). The disordered stretch occupies residues 1–68 (MSSTYKDNHP…PSPSSFSSAA (68 aa)). Residues 11–23 (YHHHPHHHHHHPK) are compositionally biased toward basic residues. The short motif at 91 to 100 (FMALVQKLTG) is the VQ element. Positions 195–218 (YSAVAIPPQPPPHPPPPPPPPSMY) are disordered. Positions 201–216 (PPQPPPHPPPPPPPPS) are enriched in pro residues.

The protein resides in the nucleus. In terms of biological role, may function as negative regulator of plant defense. The sequence is that of VQ motif-containing protein 20 from Arabidopsis thaliana (Mouse-ear cress).